The chain runs to 388 residues: Succinate--CoA ligase [ADP-forming] subunit beta (388 aa).

Positions 9-245 (KELLAKYGLP…KSQENERELK (237 aa)) constitute an ATP-grasp domain. Residues Lys46, 53–55 (GRG), Glu100, Tyr103, and Glu108 each bind ATP. Asn200 and Asp214 together coordinate Mg(2+). Residues Asn265 and 322 to 324 (GIV) each bind substrate.

Belongs to the succinate/malate CoA ligase beta subunit family. Heterotetramer of two alpha and two beta subunits. It depends on Mg(2+) as a cofactor.

It catalyses the reaction succinate + ATP + CoA = succinyl-CoA + ADP + phosphate. The catalysed reaction is GTP + succinate + CoA = succinyl-CoA + GDP + phosphate. It functions in the pathway carbohydrate metabolism; tricarboxylic acid cycle; succinate from succinyl-CoA (ligase route): step 1/1. In terms of biological role, succinyl-CoA synthetase functions in the citric acid cycle (TCA), coupling the hydrolysis of succinyl-CoA to the synthesis of either ATP or GTP and thus represents the only step of substrate-level phosphorylation in the TCA. The beta subunit provides nucleotide specificity of the enzyme and binds the substrate succinate, while the binding sites for coenzyme A and phosphate are found in the alpha subunit. The protein is Succinate--CoA ligase [ADP-forming] subunit beta of Laribacter hongkongensis (strain HLHK9).